The sequence spans 500 residues: Probable malate:quinone oxidoreductase (500 aa).

The protein belongs to the MQO family. FAD serves as cofactor.

It catalyses the reaction (S)-malate + a quinone = a quinol + oxaloacetate. It participates in carbohydrate metabolism; tricarboxylic acid cycle; oxaloacetate from (S)-malate (quinone route): step 1/1. The sequence is that of Probable malate:quinone oxidoreductase from Bacillus anthracis (strain A0248).